Reading from the N-terminus, the 520-residue chain is Acetylcholine receptor subunit delta (520 aa).

An N-terminal signal peptide occupies residues 1 to 24 (MAGPVLTLGLLAALVVCALPGSWG). The Extracellular portion of the chain corresponds to 25-248 (LNEEQRLIQH…VTFYLIIRRK (224 aa)). Residues N100, N167, and N193 are each glycosylated (N-linked (GlcNAc...) asparagine). C154 and C168 are joined by a disulfide. 3 helical membrane-spanning segments follow: residues 249–273 (PLFYIINILVPCVLISFMINLVFYL), 281–299 (TSVAISVLLAQSVFLLLIS), and 315–336 (FLLFGMVLVTMVVVICVIVLNI). Topologically, residues 337 to 474 (HFRTPSTHVL…WNQVARTVDR (138 aa)) are cytoplasmic. Y393 carries the post-translational modification Phosphotyrosine; by Tyr-kinases. A helical membrane pass occupies residues 475–493 (LCLFVVTPVMVVGTAWIFL).

Belongs to the ligand-gated ion channel (TC 1.A.9) family. Acetylcholine receptor (TC 1.A.9.1) subfamily. Delta/CHRND sub-subfamily. Pentamer of two alpha chains, and one each of the beta, delta, and gamma (in immature muscle) or epsilon (in mature muscle) chains. The muscle heteropentamer composed of alpha-1, beta-1, delta, epsilon subunits interacts with the alpha-conotoxin ImII.

It localises to the postsynaptic cell membrane. It is found in the cell membrane. It catalyses the reaction K(+)(in) = K(+)(out). The enzyme catalyses Na(+)(in) = Na(+)(out). Its function is as follows. After binding acetylcholine, the AChR responds by an extensive change in conformation that affects all subunits and leads to opening of an ion-conducting channel across the plasma membrane. This Mus musculus (Mouse) protein is Acetylcholine receptor subunit delta (Chrnd).